The primary structure comprises 275 residues: 3-methyl-2-oxobutanoate hydroxymethyltransferase (275 aa).

Asp49 and Asp88 together coordinate Mg(2+). 3-methyl-2-oxobutanoate-binding positions include 49–50, Asp88, and Lys118; that span reads DS. Mg(2+) is bound at residue Glu120. Residue Glu187 is the Proton acceptor of the active site.

This sequence belongs to the PanB family. As to quaternary structure, homodecamer; pentamer of dimers. Requires Mg(2+) as cofactor.

It is found in the cytoplasm. It catalyses the reaction 3-methyl-2-oxobutanoate + (6R)-5,10-methylene-5,6,7,8-tetrahydrofolate + H2O = 2-dehydropantoate + (6S)-5,6,7,8-tetrahydrofolate. Its pathway is cofactor biosynthesis; (R)-pantothenate biosynthesis; (R)-pantoate from 3-methyl-2-oxobutanoate: step 1/2. Its function is as follows. Catalyzes the reversible reaction in which hydroxymethyl group from 5,10-methylenetetrahydrofolate is transferred onto alpha-ketoisovalerate to form ketopantoate. The chain is 3-methyl-2-oxobutanoate hydroxymethyltransferase from Brucella suis (strain ATCC 23445 / NCTC 10510).